Here is a 903-residue protein sequence, read N- to C-terminus: Dual 3',5'-cyclic-AMP and -GMP phosphodiesterase 11A (903 aa).

2 consecutive GAF domains span residues Asp175 to Ile324 and Asp356 to Ile512. 3',5'-cyclic GMP is bound at residue Ser378. A PDEase domain is found at Ser542 to Arg866. His618 serves as the catalytic Proton donor. A divalent metal cation-binding residues include His622, His658, Asp659, and Asp770. A disordered region spans residues Asp863–Ser903. Residues Cys893–Ser903 are compositionally biased toward polar residues.

Belongs to the cyclic nucleotide phosphodiesterase family. It depends on a divalent metal cation as a cofactor.

The protein localises to the cytoplasm. Its subcellular location is the cytosol. The catalysed reaction is 3',5'-cyclic GMP + H2O = GMP + H(+). The enzyme catalyses 3',5'-cyclic AMP + H2O = AMP + H(+). Its function is as follows. Plays a role in signal transduction by regulating the intracellular concentration of cyclic nucleotides cAMP and cGMP. Catalyzes the hydrolysis of both cAMP and cGMP to 5'-AMP and 5'-GMP, respectively. The chain is Dual 3',5'-cyclic-AMP and -GMP phosphodiesterase 11A (pde11a) from Takifugu rubripes (Japanese pufferfish).